The following is a 535-amino-acid chain: Glutamyl-tRNA reductase 3, chloroplastic (535 aa).

Catalysis depends on Cys-131, which acts as the Nucleophile. Substrate-binding positions include Cys-131–Arg-133, Ser-190, Glu-195–Gln-197, and Gln-201. Gly-272–Gly-277 contributes to the NADP(+) binding site.

This sequence belongs to the glutamyl-tRNA reductase family. In terms of tissue distribution, primarily expressed in roots.

It is found in the plastid. Its subcellular location is the chloroplast. The catalysed reaction is (S)-4-amino-5-oxopentanoate + tRNA(Glu) + NADP(+) = L-glutamyl-tRNA(Glu) + NADPH + H(+). The protein operates within porphyrin-containing compound metabolism; protoporphyrin-IX biosynthesis; 5-aminolevulinate from L-glutamyl-tRNA(Glu): step 1/2. Its function is as follows. Catalyzes the NADPH-dependent reduction of glutamyl-tRNA(Glu) to glutamate 1-semialdehyde (GSA). This is Glutamyl-tRNA reductase 3, chloroplastic (HEMA3) from Hordeum vulgare (Barley).